Reading from the N-terminus, the 123-residue chain is Ragulator complex protein LAMTOR3-B (123 aa).

Belongs to the LAMTOR3 family. Part of the Ragulator complex composed of lamtor1, lamtor2, lamtor3, lamtor4 and lamtor5. The Ragulator complex interacts with slc38a9; the probable amino acid sensor. Component of the lysosomal folliculin complex (LFC).

The protein resides in the late endosome membrane. As part of the Ragulator complex it is involved in amino acid sensing and activation of mTORC1, a signaling complex promoting cell growth in response to growth factors, energy levels, and amino acids. Activated by amino acids through a mechanism involving the lysosomal V-ATPase, the Ragulator plays a dual role for the small GTPases Rag (RagA/RRAGA, RagB/RRAGB, RagC/RRAGC and/or RagD/RRAGD): it (1) acts as a guanine nucleotide exchange factor (GEF), activating the small GTPases Rag and (2) mediates recruitment of Rag GTPases to the lysosome membrane. Activated Ragulator and Rag GTPases function as a scaffold recruiting mTORC1 to lysosomes where it is in turn activated. The sequence is that of Ragulator complex protein LAMTOR3-B (lamtor3-b) from Xenopus laevis (African clawed frog).